The sequence spans 134 residues: Profilin-2 (134 aa).

An intrachain disulfide couples cysteine 13 to cysteine 118. Residues alanine 84–threonine 100 carry the Involved in PIP2 interaction motif. The residue at position 114 (threonine 114) is a Phosphothreonine.

It belongs to the profilin family. Occurs in many kinds of cells as a complex with monomeric actin in a 1:1 ratio. In terms of processing, phosphorylated by MAP kinases.

It localises to the cytoplasm. It is found in the cytoskeleton. In terms of biological role, binds to actin and affects the structure of the cytoskeleton. At high concentrations, profilin prevents the polymerization of actin, whereas it enhances it at low concentrations. The chain is Profilin-2 from Olea europaea (Common olive).